The primary structure comprises 287 residues: Toxin zeta (287 aa).

40–47 (GQPGSGKT) lines the ATP pocket. Asparagine 66 provides a ligand contact to substrate. The Proton acceptor role is filled by aspartate 67. Positions 100, 118, 120, and 128 each coordinate substrate. The disordered stretch occupies residues 267–287 (KLESLQPPTPPIPKTPKLPGI). The segment covering 273–287 (PPTPPIPKTPKLPGI) has biased composition (pro residues).

Belongs to the zeta toxin family. In terms of assembly, in the presence of the epsilon antitoxin forms an inactive PezA(2)PezT(2) heterotetramer. The heterotetramer is still able to bind the UNAG substrate.

The catalysed reaction is UDP-N-acetyl-alpha-D-glucosamine + ATP = UDP-N-acetyl-alpha-D-glucosamine 3'-phosphate + ADP + H(+). Its function is as follows. Toxic component of a type II toxin-antitoxin (TA) system. Phosphorylates UDP-N-acetyl-D-glucosamine (UNAG) on the 3'-hydroxyl group of the N-acetyl-D-glucosamine moiety, yielding UNAG-3P. UNAG-3P inhibits MurA, the first committed step in cell wall synthesis, which is then blocked. Phosphorylation is inhibited by cognate epsilon antitoxin. Part of a postsegregational killing (PSK) system involved in the killing of plasmid-free cells. The zeta toxin induces programmed cell death. The polypeptide is Toxin zeta (Streptococcus pyogenes).